The following is a 705-amino-acid chain: Elongation factor G (705 aa).

Positions 8-294 constitute a tr-type G domain; it reads ELYRNFGIMA…SVIDYLPSPL (287 aa). Residues 17–24, 92–96, and 146–149 contribute to the GTP site; these read AHIDAGKT, DTPGH, and NKMD.

This sequence belongs to the TRAFAC class translation factor GTPase superfamily. Classic translation factor GTPase family. EF-G/EF-2 subfamily.

Its subcellular location is the cytoplasm. In terms of biological role, catalyzes the GTP-dependent ribosomal translocation step during translation elongation. During this step, the ribosome changes from the pre-translocational (PRE) to the post-translocational (POST) state as the newly formed A-site-bound peptidyl-tRNA and P-site-bound deacylated tRNA move to the P and E sites, respectively. Catalyzes the coordinated movement of the two tRNA molecules, the mRNA and conformational changes in the ribosome. The chain is Elongation factor G from Cereibacter sphaeroides (strain KD131 / KCTC 12085) (Rhodobacter sphaeroides).